The chain runs to 1174 residues: Ribonucleoside-diphosphate reductase large subunit-like protein (1174 aa).

Residues 50-72 (PYVRIMNGVSGIQIGNHNAMSIA) carry the RIP homotypic interaction motif (RHIM) motif. Disordered regions lie at residues 170–269 (ASNA…KLKP) and 291–325 (AAAA…DQSS). 3 stretches are compositionally biased toward low complexity: residues 182–202 (ATSG…AATA), 233–243 (HVSVGTQATPS), and 291–316 (AAAA…AMAT).

Belongs to the ribonucleoside diphosphate reductase large chain family. Self-assembles into homo-oligomeric amyloid fibrils. Interacts with host RIPK1 (via RIP homotypic interaction motif); this interaction inhibits RIPK1 ubiquitination thereby preventing effective activation of host NF-kappa-B. Interacts with host RIPK3 (via RIP homotypic interaction motif); this interaction disrupts RIPK3-RIPK1 interactions characteristic of TNF-alpha induced necroptosis, thereby suppressing this death pathway. Interacts (via RIP homotypic interaction motif) with host ZBP1 (via RIP homotypic interaction motif); this interaction inhibits recruitment of RIPK1 and RIPK3 to ZBP1 and prevents ZBP1-induced NF-kappa-B activation. In terms of processing, undergoes proteolytic cleavage, generating two peptides, a N-terminal and a 116 kDa. The N-terminal peptide retains RIPK1- and RIPK3-binding activity as well as cell death suppression activity.

It localises to the virion. The protein localises to the host cytoplasm. Its function is as follows. Provides optimal viral replication conditions by promoting host cell survival and avoiding the host inflammatory response linked to NF-kappa-B activation. Blocks RIPK1 ubiquitination, thereby preventing NF-kappa-B activation and virally induced inflammatory response. Prevents host necroptosis by targeting RIPK3 thereby preventing the formation of necroptotic RIPK1-RIPK3 complexes. Also inhibits ZBP1-induced necroptosis. Does not have ribonucleotide reductase activity. Betaherpesviruses probably use another strategy to expand the dNTP pool in a quiescent host cell. This Murid herpesvirus 1 (strain Smith) (MuHV-1) protein is Ribonucleoside-diphosphate reductase large subunit-like protein.